Reading from the N-terminus, the 466-residue chain is Proline--tRNA ligase (466 aa).

It belongs to the class-II aminoacyl-tRNA synthetase family. ProS type 3 subfamily. In terms of assembly, homodimer.

It localises to the cytoplasm. The catalysed reaction is tRNA(Pro) + L-proline + ATP = L-prolyl-tRNA(Pro) + AMP + diphosphate. Functionally, catalyzes the attachment of proline to tRNA(Pro) in a two-step reaction: proline is first activated by ATP to form Pro-AMP and then transferred to the acceptor end of tRNA(Pro). The protein is Proline--tRNA ligase of Picrophilus torridus (strain ATCC 700027 / DSM 9790 / JCM 10055 / NBRC 100828 / KAW 2/3).